Consider the following 617-residue polypeptide: Transmembrane protein 232 (617 aa).

A helical membrane pass occupies residues leucine 129–leucine 149. The stretch at leucine 567 to glutamine 604 forms a coiled coil. The segment at glutamate 598–glutamate 617 is disordered.

It localises to the membrane. Functionally, plays a critical role for male fertility and sperm motility by regulating sperm cytoplasm removal and maintaining axoneme integrity. The sequence is that of Transmembrane protein 232 (Tmem232) from Rattus norvegicus (Rat).